The following is a 402-amino-acid chain: Phosphoglycerate kinase (402 aa).

Residues 24–26, R40, 63–66, R122, and R155 contribute to the substrate site; these read DFN and HFGR. Residues K206, G297, E328, and 358-361 each bind ATP; that span reads GGDS.

This sequence belongs to the phosphoglycerate kinase family. In terms of assembly, monomer.

The protein resides in the cytoplasm. The catalysed reaction is (2R)-3-phosphoglycerate + ATP = (2R)-3-phospho-glyceroyl phosphate + ADP. It functions in the pathway carbohydrate degradation; glycolysis; pyruvate from D-glyceraldehyde 3-phosphate: step 2/5. In Prochlorococcus marinus (strain AS9601), this protein is Phosphoglycerate kinase.